Here is a 555-residue protein sequence, read N- to C-terminus: Glutamine--tRNA ligase (555 aa).

The short motif at 35–45 (PEPNGYLHIGH) is the 'HIGH' region element. Residues 36 to 38 (EPN) and 42 to 48 (HIGHAKS) each bind ATP. L-glutamine contacts are provided by aspartate 68 and tyrosine 213. Residues threonine 232 and 262-263 (RL) contribute to the ATP site. Positions 269–273 (ITSKR) match the 'KMSKS' region motif.

Belongs to the class-I aminoacyl-tRNA synthetase family. In terms of assembly, monomer.

It is found in the cytoplasm. The enzyme catalyses tRNA(Gln) + L-glutamine + ATP = L-glutaminyl-tRNA(Gln) + AMP + diphosphate. In Stutzerimonas stutzeri (strain A1501) (Pseudomonas stutzeri), this protein is Glutamine--tRNA ligase.